A 187-amino-acid polypeptide reads, in one-letter code: MRLVLLGPPGSGKGTQATRLKEKLGIAHISTGDMLRAEIAAGSELGKQAKAVMDAGNLVSDDILLGMLESRLTQADVAKGFILDGYPRNVAQANAMDGLLAKIGQPLDAVVQLDVATELLVDRIAGRAKEQGRADDSPEAVRQRLQVYNDQTAPVVDFYAARGTLARVDGVGELDEIEARILAAIKG.

10-15 (GSGKGT) provides a ligand contact to ATP. Residues 30–59 (STGDMLRAEIAAGSELGKQAKAVMDAGNLV) form an NMP region. AMP-binding positions include T31, R36, 57 to 59 (NLV), 85 to 88 (GYPR), and Q92. Residues 126–136 (GRAKEQGRADD) form an LID region. Residue R127 coordinates ATP. Residues R133 and R144 each coordinate AMP. G172 contacts ATP.

Belongs to the adenylate kinase family. As to quaternary structure, monomer.

It localises to the cytoplasm. It catalyses the reaction AMP + ATP = 2 ADP. Its pathway is purine metabolism; AMP biosynthesis via salvage pathway; AMP from ADP: step 1/1. Functionally, catalyzes the reversible transfer of the terminal phosphate group between ATP and AMP. Plays an important role in cellular energy homeostasis and in adenine nucleotide metabolism. The protein is Adenylate kinase of Stenotrophomonas maltophilia (strain R551-3).